Here is a 236-residue protein sequence, read N- to C-terminus: DNA repair protein RecO (236 aa).

It belongs to the RecO family.

Involved in DNA repair and RecF pathway recombination. This chain is DNA repair protein RecO, found in Rickettsia typhi (strain ATCC VR-144 / Wilmington).